Reading from the N-terminus, the 348-residue chain is Killer cell immunoglobulin-like receptor 2DL2 (348 aa).

The N-terminal stretch at M1 to P21 is a signal peptide. The Extracellular portion of the chain corresponds to H22–H245. Ig-like C2-type domains are found at residues E42–S107 and G142–S205. Disulfide bonds link C49–C100 and C149–C198. 3 N-linked (GlcNAc...) asparagine glycosylation sites follow: N84, N178, and N211. The helical transmembrane segment at I246–L264 threads the bilayer. Residues H265 to P348 are Cytoplasmic-facing.

The protein belongs to the immunoglobulin superfamily.

Its subcellular location is the cell membrane. Functionally, receptor on natural killer (NK) cells for HLA-Cw1, 3, 7, and 8 allotypes. Inhibits the activity of NK cells thus preventing cell lysis. The sequence is that of Killer cell immunoglobulin-like receptor 2DL2 from Homo sapiens (Human).